A 418-amino-acid chain; its full sequence is Glutamyl-tRNA reductase (418 aa).

Substrate contacts are provided by residues 49–52, Ser-109, 114–116, and Gln-120; these read TCNR and EPQ. Cys-50 functions as the Nucleophile in the catalytic mechanism. NADP(+) is bound at residue 189–194; it reads GAGETI.

This sequence belongs to the glutamyl-tRNA reductase family. In terms of assembly, homodimer.

It catalyses the reaction (S)-4-amino-5-oxopentanoate + tRNA(Glu) + NADP(+) = L-glutamyl-tRNA(Glu) + NADPH + H(+). Its pathway is porphyrin-containing compound metabolism; protoporphyrin-IX biosynthesis; 5-aminolevulinate from L-glutamyl-tRNA(Glu): step 1/2. Its function is as follows. Catalyzes the NADPH-dependent reduction of glutamyl-tRNA(Glu) to glutamate 1-semialdehyde (GSA). The polypeptide is Glutamyl-tRNA reductase (Erwinia tasmaniensis (strain DSM 17950 / CFBP 7177 / CIP 109463 / NCPPB 4357 / Et1/99)).